The sequence spans 396 residues: MSLPFSQDERDLAAGGILTIDLAALRHNYSAIATRIAPTRTAAVVKADAYGLGASRVAPAFYEAGCRDFFVAHLGEAVALKPFLKPDATLYVLNGLQPGTEAACAREGILPVLNSLEQVENWAALATRLGKKLPALLQFDTGMSRLGLSAKEFDRLLENVTLLSRIDIKFAISHLANGDEPGNAANARQLAKMTALLARLPKLPAALANSGGTFLGKTYYFDLARPGIALYGIDPERQHDFSDKVAHENKKPKHSILPVLTLSARVIQVRDVDKGATVGYGGTYVANGPMRIATIAVGYADGLFRSLSNKGAAFFGDTRLPIIGRVSMDSITLDVTSLPEGTLKLGSLVELIGPHQRLEDVARDCDTIPYEILTALGNRYARVYVYVNGGGTSTTA.

The Proton acceptor; specific for D-alanine role is filled by K46. Position 46 is an N6-(pyridoxal phosphate)lysine (K46). Residue R145 coordinates substrate. The active-site Proton acceptor; specific for L-alanine is the Y280. Position 328 (M328) interacts with substrate.

This sequence belongs to the alanine racemase family. The cofactor is pyridoxal 5'-phosphate.

It carries out the reaction L-alanine = D-alanine. It functions in the pathway amino-acid biosynthesis; D-alanine biosynthesis; D-alanine from L-alanine: step 1/1. Catalyzes the interconversion of L-alanine and D-alanine. May also act on other amino acids. In Brucella canis (strain ATCC 23365 / NCTC 10854 / RM-666), this protein is Alanine racemase (alr).